Consider the following 248-residue polypeptide: Adenosylcobinamide-GDP ribazoletransferase (248 aa).

8 consecutive transmembrane segments (helical) span residues 3–23 (ELKALILSIQFMTGIPIPINI), 35–55 (SYFPVVGLLIGGILYIAYLLL), 63–83 (IVMTFLVAFSYILTRGMHIDG), 109–129 (LGTNGVLALVFMVILKILFLS), 135–155 (LLFSALLVSPVIARLSVVFSI), 180–199 (FVIALLISTIAGYFVMPLKD), 200–219 (LALLYVISLSFTCLISKYIS), and 228–248 (DTLGAVNEFVELIAFIYFSIL).

It belongs to the CobS family. It depends on Mg(2+) as a cofactor.

Its subcellular location is the cell membrane. It catalyses the reaction alpha-ribazole + adenosylcob(III)inamide-GDP = adenosylcob(III)alamin + GMP + H(+). It carries out the reaction alpha-ribazole 5'-phosphate + adenosylcob(III)inamide-GDP = adenosylcob(III)alamin 5'-phosphate + GMP + H(+). Its pathway is cofactor biosynthesis; adenosylcobalamin biosynthesis; adenosylcobalamin from cob(II)yrinate a,c-diamide: step 7/7. In terms of biological role, joins adenosylcobinamide-GDP and alpha-ribazole to generate adenosylcobalamin (Ado-cobalamin). Also synthesizes adenosylcobalamin 5'-phosphate from adenosylcobinamide-GDP and alpha-ribazole 5'-phosphate. This Caldanaerobacter subterraneus subsp. tengcongensis (strain DSM 15242 / JCM 11007 / NBRC 100824 / MB4) (Thermoanaerobacter tengcongensis) protein is Adenosylcobinamide-GDP ribazoletransferase.